Reading from the N-terminus, the 149-residue chain is Ribosomal RNA large subunit methyltransferase H (149 aa).

Residues Leu71, Gly98, and 117-122 (LSKLTL) each bind S-adenosyl-L-methionine.

Belongs to the RNA methyltransferase RlmH family. In terms of assembly, homodimer.

Its subcellular location is the cytoplasm. It catalyses the reaction pseudouridine(1915) in 23S rRNA + S-adenosyl-L-methionine = N(3)-methylpseudouridine(1915) in 23S rRNA + S-adenosyl-L-homocysteine + H(+). Specifically methylates the pseudouridine at position 1915 (m3Psi1915) in 23S rRNA. The sequence is that of Ribosomal RNA large subunit methyltransferase H from Campylobacter jejuni subsp. doylei (strain ATCC BAA-1458 / RM4099 / 269.97).